Here is an 809-residue protein sequence, read N- to C-terminus: MAYEASLIEKKWQKIWDENEYFEPKDDLNLPKKYILSMFPYPSGRIHMGHVRNYTIGDALARYYRKIGFNVLHPIGFDSFGMPAENAAIKHKIHPKSWTYENIAYMKKELFSLGFSFSKKRMLATSDPLYTKFEQEIFIKMFEKGLIYTKEANVNWCEQDQTVLANEQVEDGKCWRCGHEVVQKKMPGYYVKITAYAEKLLKDLEGLRDKWPNQVLTMQENWIGKSEGLAFSLNLDEKSKQKAKESSLEVFTTRADTIYGVSYVALAPEHKIVQNLLLQNLLNQDVLNKIKAIQNQSPRERQSSEKEGYFLGIYAIHPLSGEKIPLWVANFVLSDYGSGAVMAVPAHDERDFEFAKKYNLAIKQVIQTQENLPYTQKLGKLIHSQEFDNLDCNEARLKIISQFEAKNIGKRVVNFKIRDWGVSRQRYWGAPIPMIKCQSCGIAPQKLENLPITLPEDVQITGEGNPLDKHPTWKNCICPKCGKEAQKESDTLDTFFESSWYFARFASDEKTWQEKALDEKSVKYWMSVDQYIGGIEHAILHLLYARFFQKALRDLGYLTQNEPFDRLLTQGMVLKDGAKMSKSKGNVVDPDEIIEKYGADTARLFMLFAAPPAKELEWNDDAVEGAYRFICKLYDRAQNIKKGELVELKQENLNKEEKYARLKVYEALKKSEEVYHQSFAFNTLIAACMEALNALALCKNEALEQEAFYIILNILEPIIPHVCFELSEELFKCKNFKKLELKEEVFVKDTLNLAVSINGKKRAEFKISSSASKEEILAFAKENTAKWLEGKSIVKEIYVEGKLVNLVIK.

Residues 40–50 carry the 'HIGH' region motif; the sequence is PYPSGRIHMGH. Positions 579 to 583 match the 'KMSKS' region motif; the sequence is KMSKS. Lysine 582 is an ATP binding site.

Belongs to the class-I aminoacyl-tRNA synthetase family.

It localises to the cytoplasm. The catalysed reaction is tRNA(Leu) + L-leucine + ATP = L-leucyl-tRNA(Leu) + AMP + diphosphate. The protein is Leucine--tRNA ligase of Campylobacter jejuni subsp. doylei (strain ATCC BAA-1458 / RM4099 / 269.97).